Here is a 629-residue protein sequence, read N- to C-terminus: LEAF RUST 10 DISEASE-RESISTANCE LOCUS RECEPTOR-LIKE PROTEIN KINASE-like 1.1 (629 aa).

The N-terminal stretch at 1 to 19 (METVSVLLFFFLFLLAAEA) is a signal peptide. Over 20–225 (RSTKRTGCKD…PNNYHAEMRL (206 aa)) the chain is Extracellular. Residues asparagine 56, asparagine 92, asparagine 123, asparagine 124, asparagine 172, and asparagine 177 are each glycosylated (N-linked (GlcNAc...) asparagine). The chain crosses the membrane as a helical span at residues 226 to 246 (GLGIGGSVILIIILVALFAVI). The Cytoplasmic portion of the chain corresponds to 247–629 (HRNYRRKDGS…TTPNTSAYEF (383 aa)). Residues 291-565 (FSKDRLLGDG…TMEQVVHELK (275 aa)) enclose the Protein kinase domain. ATP-binding positions include 297 to 305 (LGDGGFGTV) and lysine 319. Residue tyrosine 365 is modified to Phosphotyrosine. Aspartate 416 (proton acceptor) is an active-site residue. Serine 449 carries the post-translational modification Phosphoserine. Phosphothreonine is present on residues threonine 450 and threonine 455. Tyrosine 463 carries the post-translational modification Phosphotyrosine. The disordered stretch occupies residues 609 to 629 (VSVTDQWTSKSTTPNTSAYEF).

This sequence belongs to the protein kinase superfamily. Ser/Thr protein kinase family.

It is found in the cell membrane. It carries out the reaction L-seryl-[protein] + ATP = O-phospho-L-seryl-[protein] + ADP + H(+). The enzyme catalyses L-threonyl-[protein] + ATP = O-phospho-L-threonyl-[protein] + ADP + H(+). The protein is LEAF RUST 10 DISEASE-RESISTANCE LOCUS RECEPTOR-LIKE PROTEIN KINASE-like 1.1 of Arabidopsis thaliana (Mouse-ear cress).